The chain runs to 539 residues: GMP synthase [glutamine-hydrolyzing] (539 aa).

Residues 4–202 form the Glutamine amidotransferase type-1 domain; sequence KILILDFGSQ…VLGIAGCKPD (199 aa). Cys81 acts as the Nucleophile in catalysis. Active-site residues include His176 and Glu178. In terms of domain architecture, GMPS ATP-PPase spans 203–395; the sequence is WVMRDHIEEA…LGLPPEMVYR (193 aa). 230–236 serves as a coordination point for ATP; sequence SGGVDSS.

In terms of assembly, homodimer.

It catalyses the reaction XMP + L-glutamine + ATP + H2O = GMP + L-glutamate + AMP + diphosphate + 2 H(+). It functions in the pathway purine metabolism; GMP biosynthesis; GMP from XMP (L-Gln route): step 1/1. Functionally, catalyzes the synthesis of GMP from XMP. The sequence is that of GMP synthase [glutamine-hydrolyzing] from Cupriavidus necator (strain ATCC 17699 / DSM 428 / KCTC 22496 / NCIMB 10442 / H16 / Stanier 337) (Ralstonia eutropha).